The sequence spans 134 residues: Cytochrome b5 (134 aa).

The 77-residue stretch at 5–81 (KKVLGFEEVS…MEKYYIGEID (77 aa)) folds into the Cytochrome b5 heme-binding domain. Positions 40 and 64 each coordinate heme. A helical membrane pass occupies residues 107–127 (FMIKILQFLVPILILGLALVV).

The protein belongs to the cytochrome b5 family.

It is found in the endoplasmic reticulum membrane. Its subcellular location is the microsome membrane. Functionally, membrane bound hemoprotein which function as an electron carrier for several membrane bound oxygenases. The chain is Cytochrome b5 (CYB5) from Brassica oleracea var. botrytis (Cauliflower).